The following is a 698-amino-acid chain: Ubiquitin-like modifier-activating enzyme ATG7 (698 aa).

An FAP motif motif is present at residues Phe-11–Pro-13. A Glycyl lysine isopeptide (Lys-Gly) (interchain with G-Cter in ubiquitin) cross-link involves residue Lys-41. The Glycyl thioester intermediate role is filled by Cys-567. Ser-693 is modified (phosphoserine).

It belongs to the ATG7 family. As to quaternary structure, homodimer. Interacts with ATG3; this interaction is essential for the transfer of ATG8-like proteins's thioester from ATG7 to ATG3 and plays a role in the conjugation of ATG12 to ATG5. Interacts with ATG12. Forms intermediate conjugates with GABARAPL1. Forms intermediate conjugates with ATG8-like proteins such as GABARAP, GABARAPL2 or MAP1LC3A. Interacts with EP300 acetyltransferase. Interacts with FOXO1. In terms of processing, acetylated by EP300. Post-translationally, polyubiquitinated on Lys-41 via 'Lys-63'-linked ubiquitin by TRIM32; this modification positiely regulates ATG8 and ATG12 activating enzyme activity leading to initiation of autophagy under metabolic stress. Widely expressed.

The protein localises to the cytoplasm. The protein resides in the preautophagosomal structure. E1-like activating enzyme involved in the 2 ubiquitin-like systems required for cytoplasm to vacuole transport (Cvt) and autophagy. Activates ATG12 for its conjugation with ATG5 as well as the ATG8 family proteins for their conjugation with phosphatidylethanolamine. Both systems are needed for the ATG8 association to Cvt vesicles and autophagosomes membranes. Required for autophagic death induced by caspase-8 inhibition. Facilitates LC3-I lipidation with phosphatidylethanolamine to form LC3-II which is found on autophagosomal membranes. Required for mitophagy which contributes to regulate mitochondrial quantity and quality by eliminating the mitochondria to a basal level to fulfill cellular energy requirements and preventing excess ROS production. Modulates p53/TP53 activity to regulate cell cycle and survival during metabolic stress. Also plays a key role in the maintenance of axonal homeostasis, the prevention of axonal degeneration, the maintenance of hematopoietic stem cells, the formation of Paneth cell granules, as well as in adipose differentiation. Plays a role in regulating the liver clock and glucose metabolism by mediating the autophagic degradation of CRY1 (clock repressor) in a time-dependent manner. This is Ubiquitin-like modifier-activating enzyme ATG7 from Rattus norvegicus (Rat).